Consider the following 445-residue polypeptide: StAR-related lipid transfer protein 3 (445 aa).

Residues 1 to 51 (MSKLPRELTRDLERSLPAVASLGSSLSHSQSLSSHLLPPPEKRRAISDVRR) are Cytoplasmic-facing. An MENTAL domain is found at 46-217 (ISDVRRTFCL…YSPPESFAGS (172 aa)). The helical transmembrane segment at 52–72 (TFCLFVTFDLLFISLLWIIEL) threads the bilayer. The Extracellular portion of the chain corresponds to 73-94 (NTNTGIRKNLEQEIIQYNFKTS). The chain crosses the membrane as a helical span at residues 95–115 (FFDIFVLAFFRFSGLLLGYAV). The Cytoplasmic segment spans residues 116-120 (LRLRH). A helical membrane pass occupies residues 121 to 141 (WWVIAVTTLVSSAFLIVKVIL). The Extracellular portion of the chain corresponds to 142-148 (SELLSKG). A helical transmembrane segment spans residues 149–169 (AFGYLLPIVSFVLAWLETWFL). At 170–445 (DFKVLPQEAE…QRISELGARA (276 aa)) the chain is on the cytoplasmic side. The short motif at 206–212 (QFYSPPE) is the FFAT element. Residue Ser209 is modified to Phosphoserine. An START domain is found at 230–443 (SFSAQEREYI…LRQRISELGA (214 aa)).

Belongs to the STARD3 family. As to quaternary structure, homodimer. Interacts (via the MENTAL domain) with STARD3NL. Interacts (via phosphorylated FFAT motif) with VAPA (via MSP domain). Interacts (via phosphorylated FFAT motif) with VAPB (via MSP domain). Interacts (via phosphorylated FFAT motif) with MOSPD2 (via MSP domain); this interaction allows enrichment of MOSPD2 around endosomes. Phosphorylation at Ser-209 is necessary and sufficient for the direct interaction of the phosphorylated FFAT motif with the MSP domain of MOSPD2, VAPA and VAPB and allows the tethering of two membranes that participates in the formation of ER-endosome contacts. Phosphorylation of the FFAT motif leads to conformation changes. Additional phosphorylations around the core FFAT motif (QFYSPPE) are not essential but strengthen the interaction with MOSPD2, VAPA and VAPB. Phosphorylation at Ser-209 of FFAT motif drives membrane tethering between the endoplasmic reticulum and late endosomes via interaction with VAPA and VAPB that in turn allows the efficient transport of sterol mediated by the START domain. In terms of tissue distribution, expressed in retina.

The protein localises to the late endosome membrane. The enzyme catalyses cholesterol(in) = cholesterol(out). In terms of biological role, sterol-binding protein that mediates cholesterol transport from the endoplasmic reticulum to endosomes. The sterol transport mechanism is triggered by phosphorylation of FFAT motif that leads to membrane tethering between the endoplasmic reticulum and late endosomes via interaction with VAPA and VAPB. Acts as a lipid transfer protein that redirects sterol to the endosome at the expense of the cell membrane and favors membrane formation inside endosomes. May also mediate cholesterol transport between other membranes, such as mitochondria membrane or cell membrane. However, such results need additional experimental evidences; probably mainly mediates cholesterol transport from the endoplasmic reticulum to endosomes. Does not activate transcriptional cholesterol sensing. Able to bind other lipids, such as lutein, a xanthophyll carotenoids that form the macular pigment of the retina. This chain is StAR-related lipid transfer protein 3, found in Homo sapiens (Human).